A 776-amino-acid chain; its full sequence is Calcium-independent phospholipase A2-gamma (776 aa).

Basic and acidic residues-rich tracts occupy residues 226-238 and 307-331; these read RQLQ…EESK and LKSD…ICKD. 2 disordered regions span residues 226-274 and 306-331; these read RQLQ…EALP and KLKS…ICKD. The PNPLA domain occupies 439-634; the sequence is LAIDGGGTRG…LLNNPSALAL (196 aa). The GXGXXG signature appears at 443–448; it reads GGGTRG. The helical transmembrane segment at 469 to 489 threads the bilayer; that stretch reads LFDYICGVSTGAILAFMLGLF. The GXSXG motif lies at 475–479; the sequence is GVSTG. S477 (nucleophile) is an active-site residue. The active-site Proton acceptor is the D621. The DGA/G signature appears at 621 to 623; it reads DGG. K730 bears the N6-succinyllysine mark.

It is found in the endoplasmic reticulum membrane. The protein localises to the microsome membrane. Its subcellular location is the mitochondrion membrane. The protein resides in the peroxisome membrane. The enzyme catalyses a 1,2-diacyl-sn-glycero-3-phosphocholine + H2O = a 1-acyl-sn-glycero-3-phosphocholine + a fatty acid + H(+). It carries out the reaction a 1,2-diacyl-sn-glycero-3-phosphocholine + H2O = a 2-acyl-sn-glycero-3-phosphocholine + a fatty acid + H(+). The catalysed reaction is a 1,2-diacyl-sn-glycero-3-phosphoethanolamine + H2O = a 1-acyl-sn-glycero-3-phosphoethanolamine + a fatty acid + H(+). It catalyses the reaction a 1-O-(1Z-alkenyl)-2-acyl-sn-glycero-3-phosphocholine + H2O = a 1-O-(1Z-alkenyl)-sn-glycero-3-phosphocholine + a fatty acid + H(+). The enzyme catalyses a 1-acyl-sn-glycero-3-phosphocholine + H2O = sn-glycerol 3-phosphocholine + a fatty acid + H(+). It carries out the reaction 1-acyl-2-(9Z,12Z)-octadecadienoyl-sn-glycero-3-phosphocholine + H2O = a 1-acyl-sn-glycero-3-phosphocholine + (9Z,12Z)-octadecadienoate + H(+). The catalysed reaction is 1-acyl-2-(5Z,8Z,11Z,14Z-eicosatetraenoyl)-sn-glycero-3-phosphocholine + H2O = a 1-acyl-sn-glycero-3-phosphocholine + (5Z,8Z,11Z,14Z)-eicosatetraenoate + H(+). It catalyses the reaction 1-hexadecanoyl-2-(5Z,8Z,11Z,14Z-eicosatetraenoyl)-sn-glycero-3-phosphocholine + H2O = 1-hexadecanoyl-sn-glycero-3-phosphocholine + (5Z,8Z,11Z,14Z)-eicosatetraenoate + H(+). The enzyme catalyses 1-octadecanoyl-2-(9Z-octadecenoyl)-sn-glycero-3-phosphocholine + H2O = 1-octadecanoyl-sn-glycero-3-phosphocholine + (9Z)-octadecenoate + H(+). It carries out the reaction 1-hexadecanoyl-2-(9Z-octadecenoyl)-sn-glycero-3-phosphocholine + H2O = 1-hexadecanoyl-sn-glycero-3-phosphocholine + (9Z)-octadecenoate + H(+). The catalysed reaction is 1-hexadecanoyl-2-(9Z,12Z-octadecadienoyl)-sn-glycero-3-phosphocholine + H2O = (9Z,12Z)-octadecadienoate + 1-hexadecanoyl-sn-glycero-3-phosphocholine + H(+). It catalyses the reaction 1-acyl-2-(9Z,12Z)-octadecadienoyl-sn-glycero-3-phosphoethanolamine + H2O = a 1-acyl-sn-glycero-3-phosphoethanolamine + (9Z,12Z)-octadecadienoate + H(+). The enzyme catalyses 1-acyl-2-(5Z,8Z,11Z,14Z)-eicosatetraenoyl-sn-glycero-3-phosphoethanolamine + H2O = a 1-acyl-sn-glycero-3-phosphoethanolamine + (5Z,8Z,11Z,14Z)-eicosatetraenoate + H(+). It carries out the reaction 1-hexadecanoyl-2-(5Z,8Z,11Z,14Z-eicosatetraenoyl)-sn-glycero-3-phosphoethanolamine + H2O = 1-hexadecanoyl-sn-glycero-3-phosphoethanolamine + (5Z,8Z,11Z,14Z)-eicosatetraenoate + H(+). The catalysed reaction is 1-hexadecanoyl-2-(5Z,8Z,11Z,14Z-eicosatetraenoyl)-sn-glycero-3-phosphocholine + H2O = 2-(5Z,8Z,11Z,14Z)-eicosatetraenoyl-sn-glycero-3-phosphocholine + hexadecanoate + H(+). It catalyses the reaction 1-octadecanoyl-2-(9Z-octadecenoyl)-sn-glycero-3-phosphocholine + H2O = 2-(9Z-octadecenoyl)-sn-glycero-3-phosphocholine + octadecanoate + H(+). The enzyme catalyses 1-hexadecanoyl-2-(4Z,7Z,10Z,13Z,16Z,19Z-docosahexaenoyl)-sn-glycero-3-phosphocholine + H2O = 2-(4Z,7Z,10Z,13Z,16Z,19Z-docosahexaenoyl)-sn-glycero-3-phosphocholine + hexadecanoate + H(+). It carries out the reaction 1-O-(1Z)-hexadecenyl-2 (5Z,8Z,11Z,14Z)-eicosatetraenoyl-sn-glycero-3-phosphocholine + H2O = 1-(1Z-hexadecenyl)-sn-glycero-3-phosphocholine + (5Z,8Z,11Z,14Z)-eicosatetraenoate + H(+). The catalysed reaction is 1-O-(1Z-hexadecenyl)-2-(9Z-octadecenoyl)-sn-glycero-3-phosphocholine + H2O = 1-(1Z-hexadecenyl)-sn-glycero-3-phosphocholine + (9Z)-octadecenoate + H(+). It catalyses the reaction 1-hexadecanoyl-sn-glycero-3-phosphocholine + H2O = sn-glycerol 3-phosphocholine + hexadecanoate + H(+). The enzyme catalyses 1',3'-bis-[1,2-di-(9Z,12Z-octadecadienoyl)-sn-glycero-3-phospho]-glycerol + H2O = 1'-[1,2-di-(9Z,12Z-octadecadienoyl)-sn-glycero-3-phospho]-3'-[1-(9Z,12Z-octadecadienoyl)-sn-glycero-3-phospho]-glycerol + (9Z,12Z)-octadecadienoate + H(+). It carries out the reaction 1'-[1-acyl-2-(9-hydroxy-(10E,12Z)-octadecadienoyl)-sn-glycero-3-phospho]-3'-[1,2-diacyl-sn-glycero-3-phospho]-glycerol + H2O = 9-hydroxy-(10E,12Z)-octadecadienoate + 1'-[1,2-diacyl-sn-glycero-3-phospho],3'-[1-acyl-sn-glycero-3-phospho]-glycerol + H(+). The protein operates within phospholipid metabolism. Its activity is regulated as follows. Calcium-independent phospholipase. Its function is as follows. Calcium-independent and membrane-bound phospholipase, that catalyzes the esterolytic cleavage of fatty acids from glycerophospholipids to yield free fatty acids and lysophospholipids, hence regulating membrane physical properties and the release of lipid second messengers and growth factors. Hydrolyzes phosphatidylethanolamine, phosphatidylcholine and probably phosphatidylinositol with a possible preference for the former. Has also a broad substrate specificity in terms of fatty acid moieties, hydrolyzing saturated and mono-unsaturated fatty acids at nearly equal rates from either the sn-1 or sn-2 position in diacyl phosphatidylcholine. However, has a weak activity toward polyunsaturated fatty acids at the sn-2 position, and thereby favors the production of 2-arachidonoyl lysophosphatidylcholine, a key branch point metabolite in eicosanoid signaling. On the other hand, can produce arachidonic acid from the sn-1 position of diacyl phospholipid and from the sn-2 position of arachidonate-containing plasmalogen substrates. Therefore, plays an important role in the mobilization of arachidonic acid in response to cellular stimuli and the generation of lipid second messengers. Can also hydrolyze lysophosphatidylcholine. In the mitochondrial compartment, catalyzes the hydrolysis and release of oxidized aliphatic chains from cardiolipin and integrates mitochondrial bioenergetics and signaling. It is essential for maintaining efficient bioenergetic mitochondrial function through tailoring mitochondrial membrane lipid metabolism and composition. The polypeptide is Calcium-independent phospholipase A2-gamma (Rattus norvegicus (Rat)).